Consider the following 72-residue polypeptide: Large ribosomal subunit protein uL29 (72 aa).

The protein belongs to the universal ribosomal protein uL29 family.

The chain is Large ribosomal subunit protein uL29 from Thermus thermophilus (strain ATCC BAA-163 / DSM 7039 / HB27).